A 329-amino-acid chain; its full sequence is (+)-eremophilene synthase (329 aa).

Positions 91 and 96 each coordinate Mg(2+). The DDXXD motif motif lies at 91 to 95 (DDAYD). Arg-185 is a binding site for substrate. Mg(2+) is bound by residues Asn-231 and Ser-235. Substrate is bound at residue Lys-238. A Mg(2+)-binding site is contributed by Glu-239. 317 to 318 (RY) serves as a coordination point for substrate.

It belongs to the terpene synthase family. It depends on Mg(2+) as a cofactor.

The enzyme catalyses (2E,6E)-farnesyl diphosphate = (+)-eremophilene + diphosphate. The protein operates within secondary metabolite biosynthesis; terpenoid biosynthesis. Its function is as follows. Catalyzes the conversion of (2E,6E)-farnesyl diphosphate (FPP) to yield the bicyclic sesquiterpene eremophilene via a 1,10-cyclization, which requires the abstraction of the pyrophosphate from FPP to yield the (E,E)-germacradienyl cation. The only accepted substrate is farnesyl diphosphate (FPP). This chain is (+)-eremophilene synthase, found in Sorangium cellulosum (strain So ce56) (Polyangium cellulosum (strain So ce56)).